A 436-amino-acid chain; its full sequence is Testican-3 (436 aa).

The signal sequence occupies residues 1–22; sequence MLKVSALLCVCAAAWCSQTLAA. 8 disulfide bridges follow: Cys-90/Cys-101, Cys-95/Cys-111, Cys-139/Cys-169, Cys-142/Cys-162, Cys-151/Cys-183, Cys-317/Cys-341, Cys-352/Cys-359, and Cys-361/Cys-380. Residues 133–185 form the Kazal-like domain; it reads GLPSSTCKPCPIAYASPVCGSDGHSYSSQCKLEYQACVLGKQISIKCEGRCPC. Positions 314–380 constitute a Thyroglobulin type-1 domain; the sequence is DPPCHTELSN…GSRINGVADC (67 aa). Ser-387 and Ser-392 each carry an O-linked (Xyl...) (glycosaminoglycan) serine glycan. Positions 393-436 are disordered; the sequence is GDFREWTDDEGEEDDIMNDKDDIEDDDEDEGDDDDDGDVHDGYI. Positions 399–430 are enriched in acidic residues; sequence TDDEGEEDDIMNDKDDIEDDDEDEGDDDDDGD.

Contains chondroitin sulfate and heparan sulfate O-linked oligosaccharides. Expressed in brain.

It localises to the secreted. The protein localises to the extracellular space. Its subcellular location is the extracellular matrix. Functionally, may participate in diverse steps of neurogenesis. Inhibits the processing of pro-matrix metalloproteinase 2 (MMP-2) by MT1-MMP and MT3-MMP. May interfere with tumor invasion. The polypeptide is Testican-3 (Spock3) (Mus musculus (Mouse)).